The chain runs to 366 residues: Phospho-N-acetylmuramoyl-pentapeptide-transferase (366 aa).

Helical transmembrane passes span 3–23, 55–75, 80–100, 118–138, 161–181, 197–217, 238–258, 262–282, 290–310, and 341–361; these read QIII…PILI, IAII…SYFA, FTAS…TGFA, AKLI…LRFP, IAFG…YVVV, LAAG…FWQF, IAVL…WNAA, IFMG…ISVV, VIIG…IAVF, and FWLI…GDWL.

This sequence belongs to the glycosyltransferase 4 family. MraY subfamily. The cofactor is Mg(2+).

The protein resides in the cell membrane. The catalysed reaction is UDP-N-acetyl-alpha-D-muramoyl-L-alanyl-gamma-D-glutamyl-meso-2,6-diaminopimeloyl-D-alanyl-D-alanine + di-trans,octa-cis-undecaprenyl phosphate = di-trans,octa-cis-undecaprenyl diphospho-N-acetyl-alpha-D-muramoyl-L-alanyl-D-glutamyl-meso-2,6-diaminopimeloyl-D-alanyl-D-alanine + UMP. It functions in the pathway cell wall biogenesis; peptidoglycan biosynthesis. In terms of biological role, catalyzes the initial step of the lipid cycle reactions in the biosynthesis of the cell wall peptidoglycan: transfers peptidoglycan precursor phospho-MurNAc-pentapeptide from UDP-MurNAc-pentapeptide onto the lipid carrier undecaprenyl phosphate, yielding undecaprenyl-pyrophosphoryl-MurNAc-pentapeptide, known as lipid I. The protein is Phospho-N-acetylmuramoyl-pentapeptide-transferase of Corynebacterium efficiens (strain DSM 44549 / YS-314 / AJ 12310 / JCM 11189 / NBRC 100395).